A 362-amino-acid polypeptide reads, in one-letter code: Major capsid protein VP1 (362 aa).

Residues 5 to 19 (KRKGECPGAAPKKPK) carry the Bipartite nuclear localization signal motif. At Thr338 the chain carries Phosphothreonine; by host.

It belongs to the polyomaviruses coat protein VP1 family. Homomultimer; disulfide-linked. The virus capsid is composed of 72 icosahedral units, each one composed of five disulfide-linked copies of VP1. Interacts with minor capsid proteins VP2 and VP3.

The protein localises to the virion. The protein resides in the host nucleus. Its function is as follows. Forms an icosahedral capsid with a T=7 symmetry and a 40 nm diameter. The capsid is composed of 72 pentamers linked to each other by disulfide bonds and associated with VP2 or VP3 proteins. Interacts with sialic acids on the cell surface to provide virion attachment to target cell. Once attached, the virion is internalized by endocytosis and traffics to the endoplasmic reticulum. Inside the endoplasmic reticulum, the protein folding machinery isomerizes VP1 interpentamer disulfide bonds, thereby triggering initial uncoating. Next, the virion uses the endoplasmic reticulum-associated degradation machinery to probably translocate in the cytosol before reaching the nucleus. Nuclear entry of the viral DNA involves the selective exposure and importin recognition of VP2/Vp3 nuclear localization signal. In late phase of infection, neo-synthesized VP1 encapsulates replicated genomic DNA in the nucleus, and participates in rearranging nucleosomes around the viral DNA. The sequence is that of Major capsid protein VP1 from Simian virus 12 (strain wt100) (SV-12).